A 165-amino-acid polypeptide reads, in one-letter code: Transcriptional repressor NrdR (165 aa).

A zinc finger spans residues 3–34; sequence CPYCGQLNNRVVDSRLSRSEFAVRRRRECLDC. Positions 49–139 constitute an ATP-cone domain; it reads VMVVKKDGRR…VYREFKDVDD (91 aa).

Belongs to the NrdR family. Zn(2+) is required as a cofactor.

Functionally, negatively regulates transcription of bacterial ribonucleotide reductase nrd genes and operons by binding to NrdR-boxes. The sequence is that of Transcriptional repressor NrdR from Desulforapulum autotrophicum (strain ATCC 43914 / DSM 3382 / VKM B-1955 / HRM2) (Desulfobacterium autotrophicum).